The primary structure comprises 264 residues: MLDKVKNVIVVLSGKGGVGKSTVSTQLALALRATGHKVGLLDIDLCGPSVPYLLGLEGRDIFQCDDGWVPIYTDESKTLAVMSIGFLLKNRTDPVIWRGPKKTMMIKQFLSDVKWDELDYLIIDTPPGTSDEHITVMECLREVPCNGAIIVTTPQGVALDDVRKEITFCKKTGIKLLGIVENMSGFVCPHCTECTNIFSSNGGAELANLAQVPHLGTLPIDPRVGVLAGSTASALDELPDSSTAQILRGIVQHLDALTAVPAIA.

An ATP-binding site is contributed by 14-21 (GKGGVGKS). [4Fe-4S] cluster is bound by residues C188 and C191.

Belongs to the Mrp/NBP35 ATP-binding proteins family. NUBP2/CFD1 subfamily. Heterotetramer of 2 Nubp1 and 2 Nubp2 chains. It depends on [4Fe-4S] cluster as a cofactor.

It is found in the cytoplasm. Its function is as follows. Component of the cytosolic iron-sulfur (Fe/S) protein assembly (CIA) machinery. Required for maturation of extramitochondrial Fe-S proteins. The Nubp1-Nubp2 heterotetramer forms a Fe-S scaffold complex, mediating the de novo assembly of an Fe-S cluster and its transfer to target apoproteins. In Drosophila grimshawi (Hawaiian fruit fly), this protein is Cytosolic Fe-S cluster assembly factor Nubp2 homolog.